The primary structure comprises 663 residues: Ankyrin repeat and SAM domain-containing protein 3 (663 aa).

The tract at residues 1-421 is interaction with NEK7; sequence MSELSDEASE…PGSEPQAEKS (421 aa). Ser2 and Ser5 each carry phosphoserine. ANK repeat units follow at residues 34 to 64, 68 to 97, 101 to 130, 134 to 163, 168 to 197, and 201 to 220; these read DVPL…DLNK, GGWT…SVNV, EGQT…ELEM, QGWT…NANV, YGFT…KVDT, and SGAT…IVAL. Asn96 carries the 3-hydroxyasparagine modification. 5 positions are modified to phosphoserine: Ser201, Ser225, Ser243, Ser244, and Ser245. Disordered regions lie at residues 242 to 261 and 278 to 425; these read LSSS…CRKK and TGLG…PYSG. The residue at position 318 (Thr318) is a Phosphothreonine. Ser319 bears the Phosphoserine mark. A compositionally biased stretch (basic and acidic residues) spans 322–337; sequence NERDVESSSSSSREEP. Residues Ser366, Ser369, and Ser373 each carry the phosphoserine modification. Basic residues predominate over residues 378 to 395; the sequence is KSSVRKQTRTYLKNKSRH. In terms of domain architecture, SAM spans 424–487; it reads SGPQDLATLL…TSAIARWHSS (64 aa). Residues 500–575 are a coiled coil; sequence ADRLEAEMQE…AALVLDQLRA (76 aa). A Phosphoserine modification is found at Ser540. 2 disordered regions span residues 585–604 and 637–663; these read KQHH…PADS and AEPG…SDVG. The segment covering 641–651 has biased composition (acidic residues); the sequence is ETTDAEWEEME. A compositionally biased stretch (basic and acidic residues) spans 654–663; the sequence is IARRDDSDVG.

As to quaternary structure, homooligomer. Interacts (via SAM domain) with ANKS6 (via SAM domain). Interacts with BICC1. Interacts with NPHP1. Interacts with NEK8. Interacts with HIF1AN. Interacts with NEK7; this interaction alters the subcellular distribution of NEK7 by preventing its nuclear translocation. Hydroxylated at Asn-96, most probably by HIF1AN. In terms of processing, phosphorylations at Ser-5, Ser-225, Thr-318, Ser-319, Ser-366 and Ser-369 occur in a NEK7-dependent manner. Post-translationally, polyubiquitinated.

The protein resides in the cell projection. It is found in the cilium. The protein localises to the cytoplasm. Its function is as follows. May be involved in vasopressin signaling in the kidney. The protein is Ankyrin repeat and SAM domain-containing protein 3 (Anks3) of Rattus norvegicus (Rat).